A 77-amino-acid chain; its full sequence is Conotoxin ArMSGL-0143 (77 aa).

A signal peptide spans 1–22; that stretch reads MSGLGIMLLTLLLLVFMETSHQ. A propeptide spanning residues 23 to 44 is cleaved from the precursor; the sequence is DAGEKQATQRDAINVRRRRSLT. 3 disulfides stabilise this stretch: cysteine 51/cysteine 63, cysteine 55/cysteine 71, and cysteine 62/cysteine 75. Phenylalanine 76 carries the phenylalanine amide modification.

It belongs to the conotoxin O3 superfamily. In terms of tissue distribution, expressed by the venom duct.

It is found in the secreted. The sequence is that of Conotoxin ArMSGL-0143 from Conus arenatus (Sand-dusted cone).